The sequence spans 485 residues: MIMSLSILYILPEILLALGVIVVMFSGLFLHGKIRNINYIFFQVFTLLALIATFAKEYLIQTTGLVFEGQVVFSGFAYTLQLVILVLAVFVALYSRDYVKDRKISDGDFYTLLMLCVLGAMVLTAAHSLVTIYVGLELLSLPMYALIAIYRDSGKGLEAAIKYFVLGAIASALLLFGMSFVYGMTGKLDITEIANVLAHGNFAGLQQQFLLVYLVMMIATFLFKLGAFPFHMWLPDVYQGAPNAVANIVATIPKVAAFAMLVNILFVGFPSLKDSWIYLFRIIGILSIFFGSLVALSQTNVKRLLGYSTVSQIGFVLLATTLNPQGYALTAASFYVIVYLFTTLAVFGVLTTISVGGYEVQDLNDLKGFNTKDSWLAFILLIVLFSMAGIPPFGGFIAKLFVVMGLINDGNYFLACFVLFMAVIASFYYVRVIKTMYFDDPDNDETVKPPLTSLIALSINGLVLLFLGIMPMLLLGVLTQVTNVI.

The next 14 helical transmembrane spans lie at 10–30, 40–60, 71–91, 107–127, 129–149, 164–184, 209–229, 248–268, 276–296, 304–324, 336–356, 377–397, 410–430, and 454–474; these read ILPEILLALGVIVVMFSGLFL, IFFQVFTLLALIATFAKEYLI, VVFSGFAYTLQLVILVLAVFV, GDFYTLLMLCVLGAMVLTAAH, LVTIYVGLELLSLPMYALIAI, FVLGAIASALLLFGMSFVYGM, FLLVYLVMMIATFLFKLGAFP, IVATIPKVAAFAMLVNILFVG, WIYLFRIIGILSIFFGSLVAL, LLGYSTVSQIGFVLLATTLNP, VIVYLFTTLAVFGVLTTISVG, AFILLIVLFSMAGIPPFGGFI, GNYFLACFVLFMAVIASFYYV, and LIALSINGLVLLFLGIMPMLL.

The protein belongs to the complex I subunit 2 family. As to quaternary structure, NDH-1 is composed of 14 different subunits. Subunits NuoA, H, J, K, L, M, N constitute the membrane sector of the complex.

Its subcellular location is the cell inner membrane. It carries out the reaction a quinone + NADH + 5 H(+)(in) = a quinol + NAD(+) + 4 H(+)(out). In terms of biological role, NDH-1 shuttles electrons from NADH, via FMN and iron-sulfur (Fe-S) centers, to quinones in the respiratory chain. The immediate electron acceptor for the enzyme in this species is believed to be ubiquinone. Couples the redox reaction to proton translocation (for every two electrons transferred, four hydrogen ions are translocated across the cytoplasmic membrane), and thus conserves the redox energy in a proton gradient. The sequence is that of NADH-quinone oxidoreductase subunit N from Francisella tularensis subsp. holarctica (strain FTNF002-00 / FTA).